The sequence spans 426 residues: Phosphomethylpyrimidine synthase (426 aa).

Substrate contacts are provided by residues N65, M94, Y123, H162, 184–186, 225–228, and E264; these read SRG and DGMR. H268 lines the Zn(2+) pocket. Residue Y291 coordinates substrate. H332 provides a ligand contact to Zn(2+). [4Fe-4S] cluster contacts are provided by C408, C411, and C415.

It belongs to the ThiC family. It depends on [4Fe-4S] cluster as a cofactor.

It carries out the reaction 5-amino-1-(5-phospho-beta-D-ribosyl)imidazole + S-adenosyl-L-methionine = 4-amino-2-methyl-5-(phosphooxymethyl)pyrimidine + CO + 5'-deoxyadenosine + formate + L-methionine + 3 H(+). It participates in cofactor biosynthesis; thiamine diphosphate biosynthesis. Functionally, catalyzes the synthesis of the hydroxymethylpyrimidine phosphate (HMP-P) moiety of thiamine from aminoimidazole ribotide (AIR) in a radical S-adenosyl-L-methionine (SAM)-dependent reaction. In Methanococcus vannielii (strain ATCC 35089 / DSM 1224 / JCM 13029 / OCM 148 / SB), this protein is Phosphomethylpyrimidine synthase.